Consider the following 292-residue polypeptide: tRNA(Ile)-lysidine synthase (292 aa).

32 to 37 (SGGADS) provides a ligand contact to ATP.

This sequence belongs to the tRNA(Ile)-lysidine synthase family.

It is found in the cytoplasm. It carries out the reaction cytidine(34) in tRNA(Ile2) + L-lysine + ATP = lysidine(34) in tRNA(Ile2) + AMP + diphosphate + H(+). Ligates lysine onto the cytidine present at position 34 of the AUA codon-specific tRNA(Ile) that contains the anticodon CAU, in an ATP-dependent manner. Cytidine is converted to lysidine, thus changing the amino acid specificity of the tRNA from methionine to isoleucine. The protein is tRNA(Ile)-lysidine synthase of Corynebacterium diphtheriae (strain ATCC 700971 / NCTC 13129 / Biotype gravis).